Reading from the N-terminus, the 39-residue chain is ORF8a protein (39 aa).

Residues 1–15 (MKLLIVLTCISLCSC) form the signal peptide. Residues 16-39 (ICTVVQRCASNKPHVLEDPCKVQH) enclose the SARS ORF8 Ig-like domain.

The sequence is that of ORF8a protein from Homo sapiens (Human).